The chain runs to 290 residues: Barley B recombinant-like protein C (290 aa).

Disordered regions lie at residues 60–90 and 102–183; these read PHHH…YGMM and QPEP…RKNI. The span at 104-116 shows a compositional bias: pro residues; sequence EPQPQLQHPPSPP. The span at 138 to 158 shows a compositional bias: basic residues; it reads PPKKRQQGRQPKVLRPKKPKK.

This sequence belongs to the BBR/BPC family.

It localises to the nucleus. In terms of biological role, transcriptional regulator that specifically binds to GA-rich elements (GAGA-repeats) present in regulatory sequences of genes involved in developmental processes. This Oryza sativa subsp. japonica (Rice) protein is Barley B recombinant-like protein C.